The primary structure comprises 275 residues: Octanoyl-[GcvH]:protein N-octanoyltransferase (275 aa).

One can recognise a BPL/LPL catalytic domain in the interval 42 to 246 (GQSQPVVRLW…ALQAFGSRLE (205 aa)). Cys145 acts as the Acyl-thioester intermediate in catalysis.

This sequence belongs to the octanoyltransferase LipL family.

The enzyme catalyses N(6)-octanoyl-L-lysyl-[glycine-cleavage complex H protein] + L-lysyl-[lipoyl-carrier protein] = N(6)-octanoyl-L-lysyl-[lipoyl-carrier protein] + L-lysyl-[glycine-cleavage complex H protein]. The protein operates within protein modification; protein lipoylation via endogenous pathway; protein N(6)-(lipoyl)lysine from octanoyl-[acyl-carrier-protein]. In terms of biological role, catalyzes the amidotransfer (transamidation) of the octanoyl moiety from octanoyl-GcvH to the lipoyl domain of the E2 subunit of lipoate-dependent enzymes. The chain is Octanoyl-[GcvH]:protein N-octanoyltransferase from Anoxybacillus flavithermus (strain DSM 21510 / WK1).